Reading from the N-terminus, the 79-residue chain is Sec-independent protein translocase protein TatA (79 aa).

Residues Met1–Phe21 form a helical membrane-spanning segment. Basic and acidic residues predominate over residues Lys52–Lys61. Residues Lys52–Ala79 are disordered.

This sequence belongs to the TatA/E family. In terms of assembly, the Tat system comprises two distinct complexes: a TatABC complex, containing multiple copies of TatA, TatB and TatC subunits, and a separate TatA complex, containing only TatA subunits. Substrates initially bind to the TatABC complex, which probably triggers association of the separate TatA complex to form the active translocon.

Its subcellular location is the cell inner membrane. Its function is as follows. Part of the twin-arginine translocation (Tat) system that transports large folded proteins containing a characteristic twin-arginine motif in their signal peptide across membranes. TatA could form the protein-conducting channel of the Tat system. This chain is Sec-independent protein translocase protein TatA, found in Campylobacter jejuni subsp. jejuni serotype O:6 (strain 81116 / NCTC 11828).